Consider the following 735-residue polypeptide: Ribosomal RNA large subunit methyltransferase K/L (735 aa).

The region spanning 45–156 is the THUMP domain; the sequence is DGYRACLWSR…RDSLSFSLDL (112 aa).

The protein belongs to the methyltransferase superfamily. RlmKL family.

The protein resides in the cytoplasm. It catalyses the reaction guanosine(2445) in 23S rRNA + S-adenosyl-L-methionine = N(2)-methylguanosine(2445) in 23S rRNA + S-adenosyl-L-homocysteine + H(+). It carries out the reaction guanosine(2069) in 23S rRNA + S-adenosyl-L-methionine = N(2)-methylguanosine(2069) in 23S rRNA + S-adenosyl-L-homocysteine + H(+). Functionally, specifically methylates the guanine in position 2445 (m2G2445) and the guanine in position 2069 (m7G2069) of 23S rRNA. This chain is Ribosomal RNA large subunit methyltransferase K/L, found in Allochromatium vinosum (strain ATCC 17899 / DSM 180 / NBRC 103801 / NCIMB 10441 / D) (Chromatium vinosum).